The following is a 430-amino-acid chain: Methylenetetrahydrofolate--tRNA-(uracil-5-)-methyltransferase TrmFO (430 aa).

9-14 (GAGLAG) contacts FAD.

This sequence belongs to the MnmG family. TrmFO subfamily. FAD is required as a cofactor.

It localises to the cytoplasm. The enzyme catalyses uridine(54) in tRNA + (6R)-5,10-methylene-5,6,7,8-tetrahydrofolate + NADH + H(+) = 5-methyluridine(54) in tRNA + (6S)-5,6,7,8-tetrahydrofolate + NAD(+). It carries out the reaction uridine(54) in tRNA + (6R)-5,10-methylene-5,6,7,8-tetrahydrofolate + NADPH + H(+) = 5-methyluridine(54) in tRNA + (6S)-5,6,7,8-tetrahydrofolate + NADP(+). Functionally, catalyzes the folate-dependent formation of 5-methyl-uridine at position 54 (M-5-U54) in all tRNAs. The polypeptide is Methylenetetrahydrofolate--tRNA-(uracil-5-)-methyltransferase TrmFO (Fervidobacterium nodosum (strain ATCC 35602 / DSM 5306 / Rt17-B1)).